We begin with the raw amino-acid sequence, 121 residues long: Met-lysine-1b (121 aa).

The signal sequence occupies residues 1-22 (MKSFVFALALIVAFACISESKS). Positions 23–69 (DHTGYEEEENLEDSELTDLVAAALLEELAEASEMDDLSYTEEAGGER) are excised as a propeptide. A Methionine amide modification is found at M120.

In terms of tissue distribution, expressed by the venom gland.

Its subcellular location is the secreted. Functionally, shows no antimicrobial activity against Gram-positive bacterium B.subtilis B-501 or Gram-negative bacterium E.coli DH5-alpha at concentrations up to 20 ug/ml. Shows no toxicity towards insect (S.carnaria) larvae. This is Met-lysine-1b from Lachesana tarabaevi (Spider).